The following is a 322-amino-acid chain: Undecaprenyl-phosphate 4-deoxy-4-formamido-L-arabinose transferase (322 aa).

At 1-235 (MFEIHPVKKV…TCLTTTPLRM (235 aa)) the chain is on the cytoplasmic side. A helical transmembrane segment spans residues 236–256 (LSLLGSIIAIGGFSIAVLLVI). The Periplasmic segment spans residues 257-269 (LRLTFGPQWAAEG). A helical membrane pass occupies residues 270-290 (VFMLFAVLFTFIGAQFIGMGL). Residues 291–322 (LGEYIGRIYTDVRARPRYFVQQVIRPSSKENE) are Cytoplasmic-facing.

Belongs to the glycosyltransferase 2 family.

It is found in the cell inner membrane. It catalyses the reaction UDP-4-deoxy-4-formamido-beta-L-arabinose + di-trans,octa-cis-undecaprenyl phosphate = 4-deoxy-4-formamido-alpha-L-arabinopyranosyl di-trans,octa-cis-undecaprenyl phosphate + UDP. It functions in the pathway glycolipid biosynthesis; 4-amino-4-deoxy-alpha-L-arabinose undecaprenyl phosphate biosynthesis; 4-amino-4-deoxy-alpha-L-arabinose undecaprenyl phosphate from UDP-4-deoxy-4-formamido-beta-L-arabinose and undecaprenyl phosphate: step 1/2. The protein operates within bacterial outer membrane biogenesis; lipopolysaccharide biosynthesis. Its function is as follows. Catalyzes the transfer of 4-deoxy-4-formamido-L-arabinose from UDP to undecaprenyl phosphate. The modified arabinose is attached to lipid A and is required for resistance to polymyxin and cationic antimicrobial peptides. This chain is Undecaprenyl-phosphate 4-deoxy-4-formamido-L-arabinose transferase, found in Escherichia coli (strain SMS-3-5 / SECEC).